We begin with the raw amino-acid sequence, 70 residues long: Large ribosomal subunit protein bL28 (70 aa).

The protein belongs to the bacterial ribosomal protein bL28 family.

This chain is Large ribosomal subunit protein bL28, found in Thermosipho melanesiensis (strain DSM 12029 / CIP 104789 / BI429).